A 221-amino-acid chain; its full sequence is Glutathione peroxidase (221 aa).

Residues 1 to 19 (MFIQLLILSYAILLQLIAT) form the signal peptide. Residue N28 is glycosylated (N-linked (GlcNAc...) asparagine). The active site involves C72. N87 and N90 each carry an N-linked (GlcNAc...) asparagine glycan.

It belongs to the glutathione peroxidase family. As to quaternary structure, homotetramer.

It localises to the secreted. The protein localises to the extracellular space. The enzyme catalyses 2 glutathione + H2O2 = glutathione disulfide + 2 H2O. The polypeptide is Glutathione peroxidase (Dirofilaria immitis (Canine heartworm)).